We begin with the raw amino-acid sequence, 473 residues long: 3-isopropylmalate dehydratase large subunit (473 aa).

[4Fe-4S] cluster contacts are provided by C354, C414, and C417.

This sequence belongs to the aconitase/IPM isomerase family. LeuC type 1 subfamily. In terms of assembly, heterodimer of LeuC and LeuD. It depends on [4Fe-4S] cluster as a cofactor.

It catalyses the reaction (2R,3S)-3-isopropylmalate = (2S)-2-isopropylmalate. The protein operates within amino-acid biosynthesis; L-leucine biosynthesis; L-leucine from 3-methyl-2-oxobutanoate: step 2/4. In terms of biological role, catalyzes the isomerization between 2-isopropylmalate and 3-isopropylmalate, via the formation of 2-isopropylmaleate. This chain is 3-isopropylmalate dehydratase large subunit, found in Mycobacterium tuberculosis (strain CDC 1551 / Oshkosh).